The sequence spans 188 residues: dCTP deaminase (188 aa).

DCTP-binding positions include 111–116 (KSTYAR), 135–137 (TLE), Gln156, Tyr170, and Gln180. Glu137 (proton donor/acceptor) is an active-site residue.

This sequence belongs to the dCTP deaminase family. Homotrimer.

The enzyme catalyses dCTP + H2O + H(+) = dUTP + NH4(+). It functions in the pathway pyrimidine metabolism; dUMP biosynthesis; dUMP from dCTP (dUTP route): step 1/2. Functionally, catalyzes the deamination of dCTP to dUTP. In Acidithiobacillus ferrooxidans (strain ATCC 23270 / DSM 14882 / CIP 104768 / NCIMB 8455) (Ferrobacillus ferrooxidans (strain ATCC 23270)), this protein is dCTP deaminase.